Reading from the N-terminus, the 1909-residue chain is NFX1-type zinc finger-containing protein 1 (1909 aa).

Composition is skewed to basic and acidic residues over residues 1-12 (MEDRRPHLEARP) and 76-107 (RNQEGHTSDEARDQRQSQNDTRRRNDDQEGRS). 2 disordered regions span residues 1–133 (MEDR…QPQQ) and 787–813 (TQSASPAGPENTAQAEGEEEEEGEEEG). A compositionally biased stretch (polar residues) spans 113–122 (SSDTFQQWHT). Positions 802 to 813 (EGEEEEEGEEEG) are enriched in acidic residues. Residues 939 to 964 (RRRILSYERQYRTWAERMAELRLQED) are a coiled coil. 4 consecutive NF-X1-type zinc fingers follow at residues 1291–1313 (CGHVCTRACHPYDSSHKEFQCMK), 1375–1393 (CGHRCSHLCGEDCVRLCSE), 1433–1455 (CGHPCPGSCHSCFEGRFHERCQQ), and 1463–1480 (CSHKCQEPCTGECPPCQR). The stretch at 1733 to 1764 (LAKKRLSFSSQELSDLQSEIQRLTYLVNLLMR) forms a coiled coil. An RZ-type zinc finger spans residues 1818–1889 (ISDEERVQIV…LASEMDGAQH (72 aa)). Zn(2+) is bound by residues cysteine 1840, histidine 1844, cysteine 1860, and cysteine 1863.

The protein belongs to the ZNFX1 family. As to quaternary structure, interacts with MAVS.

Its subcellular location is the mitochondrion outer membrane. It is found in the cytoplasm. It localises to the stress granule. Its function is as follows. RNA-binding protein that initiates the antiviral response and is required to restrict the replication of RNA viruses. Acts as a double-stranded RNA (dsRNA) sensor that recognizes viral RNA and then interacts with MAVS to initiate the type I interferon response. Also required for immunity against some bacteria, such as mycobacteria. The protein is NFX1-type zinc finger-containing protein 1 of Mus musculus (Mouse).